The chain runs to 429 residues: Protein ORF66 (429 aa).

It belongs to the herpesviridae UL49 family. As to quaternary structure, interacts with ORF34.

Its subcellular location is the host nucleus. It localises to the host cytoplasm. In terms of biological role, participates in the expression of late viral mRNAs. The protein is Protein ORF66 (ORF66) of Homo sapiens (Human).